Consider the following 207-residue polypeptide: 2,3-bisphosphoglycerate-dependent phosphoglycerate mutase (207 aa).

Substrate-binding positions include R10–N17, T23–G24, R62, E89–Y92, K100, R116–R117, and G160–N161. Residue H11 is the Tele-phosphohistidine intermediate of the active site. Catalysis depends on E89, which acts as the Proton donor/acceptor.

The protein belongs to the phosphoglycerate mutase family. BPG-dependent PGAM subfamily. In terms of assembly, homodimer.

It catalyses the reaction (2R)-2-phosphoglycerate = (2R)-3-phosphoglycerate. It participates in carbohydrate degradation; glycolysis; pyruvate from D-glyceraldehyde 3-phosphate: step 3/5. Functionally, catalyzes the interconversion of 2-phosphoglycerate and 3-phosphoglycerate. The polypeptide is 2,3-bisphosphoglycerate-dependent phosphoglycerate mutase (Bradyrhizobium sp. (strain ORS 278)).